Consider the following 179-residue polypeptide: Arginine repressor (179 aa).

Belongs to the ArgR family.

The protein resides in the cytoplasm. It functions in the pathway amino-acid biosynthesis; L-arginine biosynthesis [regulation]. Its function is as follows. Regulates arginine biosynthesis genes. This chain is Arginine repressor, found in Renibacterium salmoninarum (strain ATCC 33209 / DSM 20767 / JCM 11484 / NBRC 15589 / NCIMB 2235).